The chain runs to 186 residues: ATP-dependent protease subunit HslV (186 aa).

Residue threonine 14 is part of the active site. Alanine 168, cysteine 171, and threonine 174 together coordinate Na(+).

It belongs to the peptidase T1B family. HslV subfamily. As to quaternary structure, a double ring-shaped homohexamer of HslV is capped on each side by a ring-shaped HslU homohexamer. The assembly of the HslU/HslV complex is dependent on binding of ATP.

The protein resides in the cytoplasm. It catalyses the reaction ATP-dependent cleavage of peptide bonds with broad specificity.. Its activity is regulated as follows. Allosterically activated by HslU binding. Protease subunit of a proteasome-like degradation complex believed to be a general protein degrading machinery. This is ATP-dependent protease subunit HslV from Bradyrhizobium sp. (strain BTAi1 / ATCC BAA-1182).